Consider the following 414-residue polypeptide: Carboxynorspermidine synthase (414 aa).

Belongs to the saccharopine dehydrogenase family. Carboxynorspermidine synthase subfamily.

The enzyme catalyses carboxynorspermidine + NADP(+) + H2O = L-aspartate 4-semialdehyde + propane-1,3-diamine + NADPH + H(+). It carries out the reaction carboxyspermidine + NADP(+) + H2O = L-aspartate 4-semialdehyde + putrescine + NADPH + H(+). Functionally, involved in norspermidine biosynthesis. Catalyzes the synthesis of carboxynorspermidine from L-aspartate 4-semialdehyde and 1,3-diaminopropane. Is also active with putrescine as a substrate. Essential for biofilm formation. This chain is Carboxynorspermidine synthase, found in Vibrio cholerae serotype O1 (strain ATCC 39315 / El Tor Inaba N16961).